The chain runs to 358 residues: Isopentenyl-diphosphate delta-isomerase (358 aa).

12 to 13 (RK) contributes to the substrate binding site. Residues 69 to 71 (AMT), Ser99, and Asn128 each bind FMN. Residue Gln158 coordinates substrate. Glu159 provides a ligand contact to Mg(2+). Residues Lys190, Thr220, 267 to 269 (GIR), and 288 to 289 (AG) contribute to the FMN site.

The protein belongs to the IPP isomerase type 2 family. Homooctamer. Dimer of tetramers. It depends on FMN as a cofactor. Requires NADPH as cofactor. The cofactor is Mg(2+).

The protein localises to the cytoplasm. It catalyses the reaction isopentenyl diphosphate = dimethylallyl diphosphate. Its function is as follows. Involved in the biosynthesis of isoprenoids. Catalyzes the 1,3-allylic rearrangement of the homoallylic substrate isopentenyl (IPP) to its allylic isomer, dimethylallyl diphosphate (DMAPP). The sequence is that of Isopentenyl-diphosphate delta-isomerase from Listeria monocytogenes serotype 4b (strain F2365).